A 37-amino-acid chain; its full sequence is Large ribosomal subunit protein bL36 (37 aa).

Belongs to the bacterial ribosomal protein bL36 family.

This chain is Large ribosomal subunit protein bL36 (rpmJ), found in Oleidesulfovibrio alaskensis (strain ATCC BAA-1058 / DSM 17464 / G20) (Desulfovibrio alaskensis).